A 346-amino-acid chain; its full sequence is F(420)H(2) dehydrogenase subunit H (346 aa).

8 consecutive transmembrane segments (helical) span residues 18 to 38 (GIVG…AVWL), 91 to 111 (IFML…AVFI), 125 to 145 (ISVL…FMVA), 170 to 190 (PLGI…IVDI), 196 to 216 (LHWN…SLMA), 257 to 277 (ILGS…PGFI), 284 to 304 (GIIV…MVII), and 326 to 346 (LLPL…YLGA).

The protein belongs to the complex I subunit 1 family. In terms of assembly, the FPO complex is composed of at least 13 different subunits. FpoA, FpoH, FpoJ, FpoK, FpoL, FpoM and FpoN proteins constitute the membrane sector of the complex.

It localises to the cell membrane. It catalyses the reaction methanophenazine + reduced coenzyme F420-(gamma-L-Glu)(n) = dihydromethanophenazine + oxidized coenzyme F420-(gamma-L-Glu)(n) + H(+). Functionally, component of the F(420)H(2) dehydrogenase (FPO complex) which is part of the energy-conserving F(420)H(2):heterodisulfide oxidoreductase system. The membrane-bound electron transfer system of the complex plays an important role in the metabolism of methylotrophic methanogens when the organisms grow on methanol or methylamines. Catalyzes the oxidation of methanophenazine to dihydromethanophenazine. It shuttles electrons from F(420)H(2), via FAD and iron-sulfur (Fe-S) centers, to methanophenazine (an electron carrier in the membrane). It couples the redox reaction to proton translocation (for every two electrons transferred, two hydrogen ions are translocated across the cytoplasmic membrane), and thus conserves the redox energy in a proton gradient. The chain is F(420)H(2) dehydrogenase subunit H from Methanosarcina barkeri (strain Fusaro / DSM 804).